A 640-amino-acid chain; its full sequence is UvrABC system protein C (640 aa).

The 80-residue stretch at 22–101 (NDPGCYLMKD…IKSHQPYFNV (80 aa)) folds into the GIY-YIG domain. In terms of domain architecture, UVR spans 211 to 246 (DELRILLEKQMISFSESLKFEEAGSVRDQLKGIDRL).

Belongs to the UvrC family. As to quaternary structure, interacts with UvrB in an incision complex.

Its subcellular location is the cytoplasm. Functionally, the UvrABC repair system catalyzes the recognition and processing of DNA lesions. UvrC both incises the 5' and 3' sides of the lesion. The N-terminal half is responsible for the 3' incision and the C-terminal half is responsible for the 5' incision. This Prochlorococcus marinus (strain NATL1A) protein is UvrABC system protein C.